The following is a 602-amino-acid chain: Aspartate--tRNA(Asp/Asn) ligase (602 aa).

Glutamate 176 is an L-aspartate binding site. Positions 200–203 (QQFK) are aspartate. Positions 222 and 452 each coordinate L-aspartate. Residue 222-224 (RDE) participates in ATP binding. Residue glutamate 490 participates in ATP binding. Arginine 497 is a binding site for L-aspartate. 542 to 545 (GIDR) provides a ligand contact to ATP.

The protein belongs to the class-II aminoacyl-tRNA synthetase family. Type 1 subfamily. Homodimer.

It localises to the cytoplasm. The catalysed reaction is tRNA(Asx) + L-aspartate + ATP = L-aspartyl-tRNA(Asx) + AMP + diphosphate. Its function is as follows. Aspartyl-tRNA synthetase with relaxed tRNA specificity since it is able to aspartylate not only its cognate tRNA(Asp) but also tRNA(Asn). Reaction proceeds in two steps: L-aspartate is first activated by ATP to form Asp-AMP and then transferred to the acceptor end of tRNA(Asp/Asn). In Rickettsia akari (strain Hartford), this protein is Aspartate--tRNA(Asp/Asn) ligase.